The following is a 210-amino-acid chain: ESCRT-III complex subunit did4 (210 aa).

Residues 1 to 38 (MGLTSWLFGGGKSPQEQLRAHQRSLGRAERELDRERTK) form a disordered region. Residues 15 to 97 (QEQLRAHQRS…AISLRLQTMR (83 aa)) are a coiled coil. Residues 26 to 38 (GRAERELDRERTK) are compositionally biased toward basic and acidic residues.

The protein belongs to the SNF7 family. Core component of the ESCRT-III complex (endosomal sorting required for transport complex III). ESCRT-III appears to be sequentially assembled as a flat lattice on the endosome membrane.

It localises to the cytoplasm. Its subcellular location is the endosome membrane. Its function is as follows. Required for the sorting and concentration of proteins resulting in the entry of these proteins into the invaginating vesicles of the multivesicular body (MVB). Acts a component of the ESCRT-III complex, which appears to be critical for late steps in MVB sorting, such as membrane invagination and final cargo sorting and recruitment of late-acting components of the sorting machinery. The MVB pathway requires the sequential function of ESCRT-O, -I,-II and -III complex assemblies. In Schizosaccharomyces pombe (strain 972 / ATCC 24843) (Fission yeast), this protein is ESCRT-III complex subunit did4 (did4).